Consider the following 307-residue polypeptide: UPF0749 protein MT1871 (307 aa).

The first 23 residues, 1 to 23 (MAESDRLLGGYDPNAGYSAHAGA), serve as a signal peptide directing secretion. The next 2 helical transmembrane spans lie at 67 to 87 (VSWM…AAAV) and 152 to 172 (VLSL…VTVT).

The protein belongs to the UPF0749 family.

The protein resides in the cell membrane. The polypeptide is UPF0749 protein MT1871 (Mycobacterium tuberculosis (strain CDC 1551 / Oshkosh)).